A 463-amino-acid chain; its full sequence is Glucagon-like peptide 1 receptor (463 aa).

The first 21 residues, 1 to 21 (MAVTPSLLRLALLLLGAVGRA), serve as a signal peptide directing secretion. Over 22–139 (GPRPQGATVS…KQGERNSPEE (118 aa)) the chain is Extracellular. Intrachain disulfides connect Cys46–Cys71, Cys62–Cys104, and Cys85–Cys126. Residues Asn63, Asn82, and Asn115 are each glycosylated (N-linked (GlcNAc...) asparagine). The chain crosses the membrane as a helical span at residues 140–164 (QLLSLYIIYTVGYALSFSALVIASA). Residues 165-175 (ILVSFRHLHCT) are Cytoplasmic-facing. A helical transmembrane segment spans residues 176 to 201 (RNYIHLNLFASFILRALSVFIKDAAL). Residues 202 to 227 (KWMYSTAAQQHQWDGLLSYQDSLGCR) lie on the Extracellular side of the membrane. Cys226 and Cys296 are oxidised to a cystine. Residues 228–251 (LVFLLMQYCVAANYYWLLVEGVYL) traverse the membrane as a helical segment. Over 252–265 (YTLLAFSVFSEQRI) the chain is Cytoplasmic. The helical transmembrane segment at 266-290 (FKLYLSIGWGVPLLFVIPWGIVKYL) threads the bilayer. The Extracellular segment spans residues 291–305 (YEDEGCWTRNSNMNY). Residues 306–328 (WLIIRLPILFAIGVNFLVFIRVI) form a helical membrane-spanning segment. Topologically, residues 329-348 (CIVIAKLKANLMCKTDIKCR) are cytoplasmic. An ADP-ribosylcysteine modification is found at Cys341. Arg348 is subject to ADP-ribosylarginine. A helical membrane pass occupies residues 349-370 (LAKSTLTLIPLLGTHEVIFAFV). The tract at residues 352–355 (STLT) is important for allosteric inhibitor binding. The Extracellular segment spans residues 371 to 383 (MDEHARGTLRFVK). A helical transmembrane segment spans residues 384-404 (LFTELSFTSFQGFMVAVLYCF). The Cytoplasmic portion of the chain corresponds to 405–463 (VNNEVQMEFRKSWERWRLERLNIQRDSSMKPLKCPTSSVSSGATVGSSVYAATCQNSCS).

This sequence belongs to the G-protein coupled receptor 2 family. As to quaternary structure, may form homodimers and heterodimers with GIPR. In terms of processing, N-glycosylation enhances cell surface expression and lengthens receptor half-life by preventing degradation in the ER. Pancreatic islets, stomach, lung, rat insulinoma cell line.

Its subcellular location is the cell membrane. In terms of biological role, G-protein coupled receptor for glucagon-like peptide 1 (GLP-1). Ligand binding triggers activation of a signaling cascade that leads to the activation of adenylyl cyclase and increased intracellular cAMP levels. Plays a role in regulating insulin secretion in response to GLP-1. The protein is Glucagon-like peptide 1 receptor (Glp1r) of Rattus norvegicus (Rat).